A 347-amino-acid chain; its full sequence is Dual specificity mitogen-activated protein kinase kinase mek-1 (347 aa).

Residues 1-42 (MERDFDLGMGRPGGLGGLGGEPIMQQMPQPAPHHPSRSSNDH) are disordered. Positions 10-20 (GRPGGLGGLGG) are enriched in gly residues. A Protein kinase domain is found at 72-325 (LQFVEDIGHG…YDMLLQHPFV (254 aa)). Residues 78 to 86 (IGHGSCGTV) and K99 contribute to the ATP site. The active-site Proton acceptor is D193. Phosphoserine is present on residues S221 and S225.

This sequence belongs to the protein kinase superfamily. STE Ser/Thr protein kinase family. MAP kinase kinase subfamily. As to quaternary structure, interacts with shc-1; the interaction is independent of mek-1 catalytic activity, is constitutive and may facilitate mlk-1-mediated phosphorylation by bringing mlk-1 and mek-1 together. Requires Mg(2+) as cofactor. In terms of processing, may be phosphorylated at Ser-221 and/or Ser-225 by mlk-1. In terms of tissue distribution, expressed in pharyngeal muscles, uterine endothelial cells, intestine and in neurons of ring ganglia, ventral ganglion and ganglia around anus. Expressed also in hypodermis and body muscles.

The catalysed reaction is L-seryl-[protein] + ATP = O-phospho-L-seryl-[protein] + ADP + H(+). The enzyme catalyses L-threonyl-[protein] + ATP = O-phospho-L-threonyl-[protein] + ADP + H(+). It catalyses the reaction L-tyrosyl-[protein] + ATP = O-phospho-L-tyrosyl-[protein] + ADP + H(+). With respect to regulation, may be activated by phosphorylation at Ser-221 and Ser-225. Its function is as follows. Dual specificity protein kinase which may phosphorylate kgb-1 and thereby is an essential component of the JNK pathway composed of mlk-1, mek-1 and kgb-1. May also have a synergistic role with sek-1 in phosphorylating pmk-1. Involved in the response to environmental stress including heavy metal ions (Cu(2+) and Cd(2+)), oxidative stress and starvation. In association with sek-1, regulates germline cell apoptosis in response to oxidative, osmotic and heat shock stresses. Involved in resistance to pathogenic bacteria infection. Involved in axon regeneration after injury. The chain is Dual specificity mitogen-activated protein kinase kinase mek-1 from Caenorhabditis elegans.